The following is a 142-amino-acid chain: Small ribosomal subunit protein uS8c (142 aa).

It belongs to the universal ribosomal protein uS8 family. In terms of assembly, part of the 30S ribosomal subunit.

The protein localises to the plastid. In terms of biological role, one of the primary rRNA binding proteins, it binds directly to 16S rRNA central domain where it helps coordinate assembly of the platform of the 30S subunit. The chain is Small ribosomal subunit protein uS8c (rps8) from Euglena longa (Euglenophycean alga).